Reading from the N-terminus, the 247-residue chain is MADS-box transcription factor 1 (247 aa).

Positions 1 to 61 constitute an MADS-box domain; that stretch reads MGRGRVELKR…GKLYEFCSTS (61 aa). Residues 91–181 form the K-box domain; sequence ELSSQQEYLK…RQRMEGYQIN (91 aa).

In terms of tissue distribution, expressed abundantly in the seed coat and to lesser extent in young buds, carpels, petals, and stamen.

It localises to the nucleus. Functionally, probable transcription factor. The sequence is that of MADS-box transcription factor 1 from Pisum sativum (Garden pea).